A 1607-amino-acid polypeptide reads, in one-letter code: Thrombospondin type-1 domain-containing protein 7B (1607 aa).

Residues 1–31 (MFLRSDLAVTHWVSRSMRKLFLVLSLLLSQA) form the signal peptide. Topologically, residues 32–1556 (AHLEGRKDNQ…QPLDPDGRVK (1525 aa)) are extracellular. 18 consecutive TSP type-1 domains span residues 40–98 (NQFL…RVCD), 102–177 (DLFQ…IPCP), 179–233 (DCVV…VSCP), 336–392 (DCET…IAEG), 399–482 (PRYS…VPCS), 484–543 (DCIV…PMCH), 601–661 (DCVV…HSCT), 662–735 (QLYW…LPCK), 737–796 (DCLV…SLCP), 797–869 (SYRW…IPCR), 871–924 (DCTF…CPCD), 925–999 (TFMS…IPCP), 1001–1126 (DCKL…LLCP), 1128–1182 (ECVM…ENCF), 1183–1246 (QFQY…VECV), 1248–1303 (NCQL…TPCY), 1304–1369 (SWVL…VPCP), and 1371–1432 (DCHI…GKCY). Residues N150 and N219 are each glycosylated (N-linked (GlcNAc...) asparagine). Cystine bridges form between C411–C477, C431–C481, and C442–C466. 3 disulfide bridges follow: C602–C643, C613–C617, and C655–C660. An N-linked (GlcNAc...) asparagine glycan is attached at N683. 3 disulfides stabilise this stretch: C738-C779, C749-C753, and C789-C795. N-linked (GlcNAc...) asparagine glycosylation occurs at N757. N842 carries an N-linked (GlcNAc...) asparagine glycan. The N-linked (GlcNAc...) asparagine glycan is linked to N933. 5 disulfide bridges follow: C937-C994, C960-C998, C971-C984, C1002-C1039, and C1013-C1017. An N-linked (GlcNAc...) asparagine glycan is attached at N985. An N-linked (GlcNAc...) asparagine glycan is attached at N1105. Residues C1121 and C1125 are joined by a disulfide bond. N-linked (GlcNAc...) asparagine glycosylation is found at N1187 and N1199. 3 disulfides stabilise this stretch: C1249-C1287, C1260-C1264, and C1297-C1302. N-linked (GlcNAc...) asparagine glycosylation is found at N1309 and N1335. Cystine bridges form between C1372–C1416, C1383–C1387, and C1426–C1431. N-linked (GlcNAc...) asparagine glycosylation is found at N1457 and N1525. The helical transmembrane segment at 1557 to 1577 (MWVYGVSGGSFLIMIFLVFTS) threads the bilayer. Topologically, residues 1578–1607 (YLVCKKPKPHQSTPRHQKPLTLAYDGDLDM) are cytoplasmic.

The protein resides in the membrane. The protein is Thrombospondin type-1 domain-containing protein 7B of Mus musculus (Mouse).